The sequence spans 756 residues: ATP-dependent 6-phosphofructokinase 2 (756 aa).

The segment at 1-393 (MEQKFKKGKD…KQTYLNFVSI (393 aa)) is N-terminal catalytic PFK domain 1. ATP-binding positions include Gly20, 81–82 (RC), and 111–114 (GDGS). Asp112 provides a ligand contact to Mg(2+). Residues 157–159 (SID), Arg194, 201–203 (MGR), Glu257, Arg285, and 291–294 (HLQR) each bind substrate. Residue Asp159 is the Proton acceptor of the active site. Residues 394–404 (PLSTTMPSRTK) are interdomain linker. Residues 405–756 (TFAVVHIGSP…KKPQEAVLSS (352 aa)) form a C-terminal regulatory PFK domain 2 region. Residues Arg474, 530–534 (TISNN), 575–577 (MGS), Glu632, Arg658, and 664–667 (YSQL) contribute to the beta-D-fructose 2,6-bisphosphate site.

Belongs to the phosphofructokinase type A (PFKA) family. ATP-dependent PFK group I subfamily. Eukaryotic two domain clade 'E' sub-subfamily. In terms of assembly, homotetramer. Mg(2+) serves as cofactor.

It localises to the cytoplasm. The enzyme catalyses beta-D-fructose 6-phosphate + ATP = beta-D-fructose 1,6-bisphosphate + ADP + H(+). It participates in carbohydrate degradation; glycolysis; D-glyceraldehyde 3-phosphate and glycerone phosphate from D-glucose: step 3/4. Allosterically activated by ADP, AMP, or fructose 2,6-bisphosphate, and allosterically inhibited by ATP or citrate. In terms of biological role, catalyzes the phosphorylation of D-fructose 6-phosphate to fructose 1,6-bisphosphate by ATP, the first committing step of glycolysis. In Caenorhabditis elegans, this protein is ATP-dependent 6-phosphofructokinase 2.